The sequence spans 84 residues: Toxin Tst1 (84 aa).

The signal sequence occupies residues 1–19; the sequence is MKGMILFISCLLLIDIVVG. Residues 21 to 82 enclose the LCN-type CS-alpha/beta domain; the sequence is KEGYLMDHEG…VWDRATNKCG (62 aa). Intrachain disulfides connect Cys-31-Cys-81, Cys-35-Cys-57, Cys-43-Cys-62, and Cys-47-Cys-64. Residue Cys-81 is modified to Cysteine amide.

In terms of tissue distribution, expressed by the venom gland.

The protein resides in the secreted. Functionally, beta toxins bind voltage-independently at site-4 of sodium channels (Nav) and shift the voltage of activation toward more negative potentials thereby affecting sodium channel activation and promoting spontaneous and repetitive firing. This toxin is active only on mammals. Is toxic to mice. The polypeptide is Toxin Tst1 (Tityus stigmurus (Brazilian scorpion)).